We begin with the raw amino-acid sequence, 319 residues long: MLFATLEHILNHISFSTISIVITIHLITLLVHELGGLRDSSEKGMIVTFFSITGFLVSRWASSGHFPLSNLYESLIFLSWALYILHTIPKIQNSKNDLSTITTPSTILTQGFATSGLLTEMHQSTILVPALQSQWLMMHVSMMLLSYATLLCGSLLSAAILIIRFRNNFFFFSKKKKNVLLKTFFFSDFYVKRSSLKSTSVPSFPNYYKYQLTERLDSWSYRVISLGFTLLTIGILCGAVWANDAWGSYWNWDPKETWAFITWTIFAIYLHSRTNLNWKGTNSALVASIGFLIIWICYFGINLLGIGLHSYGSFILTSK.

7 consecutive transmembrane segments (helical) span residues 17–37, 44–64, 68–88, 143–163, 223–243, 257–271, and 286–306; these read TISIVITIHLITLLVHELGGL, GMIVTFFSITGFLVSRWASSG, LSNLYESLIFLSWALYILHTI, MLLSYATLLCGSLLSAAILII, VISLGFTLLTIGILCGAVWAN, TWAFITWTIFAIYLH, and VASIGFLIIWICYFGINLLGI.

This sequence belongs to the CcmF/CycK/Ccl1/NrfE/CcsA family. In terms of assembly, may interact with Ccs1.

The protein resides in the plastid. The protein localises to the chloroplast thylakoid membrane. Functionally, required during biogenesis of c-type cytochromes (cytochrome c6 and cytochrome f) at the step of heme attachment. In Lolium perenne (Perennial ryegrass), this protein is Cytochrome c biogenesis protein CcsA.